Here is a 100-residue protein sequence, read N- to C-terminus: MDLTPREKDKLLIFTAGLLAERRLARGLRLNHPEAVAYISAALLEGARDGHTVAELMHIGTTLLSRDQVMEGVPEMIPEIQIEATFPDGTKLVTVHQPIA.

Belongs to the urease gamma subunit family. In terms of assembly, heterotrimer of UreA (gamma), UreB (beta) and UreC (alpha) subunits. Three heterotrimers associate to form the active enzyme.

It localises to the cytoplasm. The catalysed reaction is urea + 2 H2O + H(+) = hydrogencarbonate + 2 NH4(+). Its pathway is nitrogen metabolism; urea degradation; CO(2) and NH(3) from urea (urease route): step 1/1. The chain is Urease subunit gamma from Azotobacter vinelandii (strain DJ / ATCC BAA-1303).